Here is a 516-residue protein sequence, read N- to C-terminus: Protein phosphatase 1H (516 aa).

2 disordered regions span residues 102–122 and 181–202; these read ADPSSVSYTPSRRRSSLPSGD and PPTCLGEESPNPQLHASASGSQ. The PPM-type phosphatase domain maps to 106–506; it reads SVSYTPSRRR…DDISVFIIPL (401 aa). The segment covering 190–202 has biased composition (polar residues); that stretch reads PNPQLHASASGSQ.

The protein belongs to the PP2C family.

Its subcellular location is the nucleus. The protein localises to the cytoplasm. It catalyses the reaction O-phospho-L-seryl-[protein] + H2O = L-seryl-[protein] + phosphate. It carries out the reaction O-phospho-L-threonyl-[protein] + H2O = L-threonyl-[protein] + phosphate. The chain is Protein phosphatase 1H (ppm1h) from Danio rerio (Zebrafish).